A 312-amino-acid chain; its full sequence is tRNA uridine(34) hydroxylase (312 aa).

A Rhodanese domain is found at 124-218 (SDPEVLLIDT…YLEEVPQEQT (95 aa)). C178 (cysteine persulfide intermediate) is an active-site residue. Basic and acidic residues-rich tracts occupy residues 279–294 (TRESARERQKQIELAR) and 302–312 (IGRDPRQLNEA). The tract at residues 279 to 312 (TRESARERQKQIELARARNQPHPIGRDPRQLNEA) is disordered.

It belongs to the TrhO family.

It carries out the reaction uridine(34) in tRNA + AH2 + O2 = 5-hydroxyuridine(34) in tRNA + A + H2O. Functionally, catalyzes oxygen-dependent 5-hydroxyuridine (ho5U) modification at position 34 in tRNAs. This is tRNA uridine(34) hydroxylase from Ectopseudomonas mendocina (strain ymp) (Pseudomonas mendocina).